Consider the following 592-residue polypeptide: Neurogenic locus notch homolog protein (592 aa).

Residues Met1–Gly19 form the signal peptide. EGF-like domains lie at Tyr64–Val104, Val106–Thr146, Tyr267–Ile307, Asn353–Glu387, Val453–Glu488, and Ile546–Asn588. Disulfide bonds link Cys68–Cys82, Cys76–Cys92, Cys110–Cys123, Cys117–Cys134, Cys136–Cys145, Cys271–Cys284, Cys278–Cys293, Cys295–Cys306, Cys362–Cys375, Cys377–Cys386, Cys457–Cys471, Cys478–Cys487, Cys550–Cys565, Cys555–Cys576, and Cys578–Cys587. Asn552 is a glycosylation site (N-linked (GlcNAc...) asparagine).

This sequence belongs to the NOTCH family. As to quaternary structure, interacts with EB1.

It is found in the cell projection. The protein resides in the cilium. It localises to the flagellum. Its subcellular location is the cytoplasm. The protein localises to the cytoskeleton. It is found in the flagellum axoneme. In Giardia intestinalis (strain ATCC 50803 / WB clone C6) (Giardia lamblia), this protein is Neurogenic locus notch homolog protein.